Here is a 353-residue protein sequence, read N- to C-terminus: Phosphoribosylformylglycinamidine cyclo-ligase (353 aa).

This sequence belongs to the AIR synthase family.

The protein resides in the cytoplasm. The enzyme catalyses 2-formamido-N(1)-(5-O-phospho-beta-D-ribosyl)acetamidine + ATP = 5-amino-1-(5-phospho-beta-D-ribosyl)imidazole + ADP + phosphate + H(+). It functions in the pathway purine metabolism; IMP biosynthesis via de novo pathway; 5-amino-1-(5-phospho-D-ribosyl)imidazole from N(2)-formyl-N(1)-(5-phospho-D-ribosyl)glycinamide: step 2/2. This is Phosphoribosylformylglycinamidine cyclo-ligase from Pseudomonas aeruginosa (strain ATCC 15692 / DSM 22644 / CIP 104116 / JCM 14847 / LMG 12228 / 1C / PRS 101 / PAO1).